A 101-amino-acid polypeptide reads, in one-letter code: MLVFVHAVLVTALILLLIGRIQLLERLLLSHLLNLTTVSNVLGVPDSSLRVNCLQLLKPDCLDFNILHKVLAETRLLVVVLRVIFLVLLGFSCYTLLGALF.

Residues Met-1–Gly-43 form the signal peptide. Residues Leu-76–Leu-96 traverse the membrane as a helical segment.

This sequence belongs to the coronaviruses ns7/ns7a protein family.

The protein resides in the host membrane. In terms of biological role, may function in the formation of membrane-bound replication complexes or in the assembly of the virus. The polypeptide is Non-structural protein 7a (Felidae (cat family)).